Reading from the N-terminus, the 61-residue chain is Large ribosomal subunit protein bL32 (61 aa).

The protein belongs to the bacterial ribosomal protein bL32 family.

This is Large ribosomal subunit protein bL32 from Ehrlichia chaffeensis (strain ATCC CRL-10679 / Arkansas).